Consider the following 166-residue polypeptide: Large ribosomal subunit protein bL9 (166 aa).

It belongs to the bacterial ribosomal protein bL9 family.

Binds to the 23S rRNA. This chain is Large ribosomal subunit protein bL9, found in Brachyspira hyodysenteriae (strain ATCC 49526 / WA1).